The chain runs to 67 residues: Ceratotoxin-C (67 aa).

The N-terminal stretch at 1–23 (MANIKAVFLICIVAFIAFHCVVA) is a signal peptide. Residues 24 to 35 (EPTAEDSVVVKR) constitute a propeptide that is removed on maturation.

Homomer of four to six subunits.

It is found in the secreted. Female-specific peptides with potent activity against Gram-positive and Gram-negative bacteria. They have as well hemolytic activity. The protein is Ceratotoxin-C (CTXC1) of Ceratitis capitata (Mediterranean fruit fly).